Reading from the N-terminus, the 129-residue chain is Glycine cleavage system H protein (129 aa).

Residues 24-106 form the Lipoyl-binding domain; it reads LVRVGISAFA…HGEGWLLVVR (83 aa). The residue at position 65 (K65) is an N6-lipoyllysine.

The protein belongs to the GcvH family. As to quaternary structure, the glycine cleavage system is composed of four proteins: P, T, L and H. The cofactor is (R)-lipoate.

Its function is as follows. The glycine cleavage system catalyzes the degradation of glycine. The H protein shuttles the methylamine group of glycine from the P protein to the T protein. In Prochlorococcus marinus (strain MIT 9303), this protein is Glycine cleavage system H protein.